Here is a 480-residue protein sequence, read N- to C-terminus: UDP-N-acetylmuramate--L-alanine ligase (480 aa).

122–128 (GTHGKTT) lines the ATP pocket.

This sequence belongs to the MurCDEF family.

Its subcellular location is the cytoplasm. The catalysed reaction is UDP-N-acetyl-alpha-D-muramate + L-alanine + ATP = UDP-N-acetyl-alpha-D-muramoyl-L-alanine + ADP + phosphate + H(+). It participates in cell wall biogenesis; peptidoglycan biosynthesis. Cell wall formation. This is UDP-N-acetylmuramate--L-alanine ligase from Pseudomonas aeruginosa (strain LESB58).